The following is a 175-amino-acid chain: Co-chaperone protein HscB homolog (175 aa).

Positions 2 to 76 constitute a J domain; sequence NYFALFNLTP…RAEHMLELRG (75 aa).

Belongs to the HscB family. As to quaternary structure, interacts with HscA and stimulates its ATPase activity.

In terms of biological role, co-chaperone involved in the maturation of iron-sulfur cluster-containing proteins. Seems to help targeting proteins to be folded toward HscA. This Pseudoalteromonas atlantica (strain T6c / ATCC BAA-1087) protein is Co-chaperone protein HscB homolog.